The chain runs to 583 residues: 2-succinyl-5-enolpyruvyl-6-hydroxy-3-cyclohexene-1-carboxylate synthase (583 aa).

Belongs to the TPP enzyme family. MenD subfamily. In terms of assembly, homodimer. Mg(2+) is required as a cofactor. Mn(2+) serves as cofactor. Requires thiamine diphosphate as cofactor.

The catalysed reaction is isochorismate + 2-oxoglutarate + H(+) = 5-enolpyruvoyl-6-hydroxy-2-succinyl-cyclohex-3-ene-1-carboxylate + CO2. It participates in quinol/quinone metabolism; 1,4-dihydroxy-2-naphthoate biosynthesis; 1,4-dihydroxy-2-naphthoate from chorismate: step 2/7. The protein operates within quinol/quinone metabolism; menaquinone biosynthesis. In terms of biological role, catalyzes the thiamine diphosphate-dependent decarboxylation of 2-oxoglutarate and the subsequent addition of the resulting succinic semialdehyde-thiamine pyrophosphate anion to isochorismate to yield 2-succinyl-5-enolpyruvyl-6-hydroxy-3-cyclohexene-1-carboxylate (SEPHCHC). The chain is 2-succinyl-5-enolpyruvyl-6-hydroxy-3-cyclohexene-1-carboxylate synthase from Chlorobium luteolum (strain DSM 273 / BCRC 81028 / 2530) (Pelodictyon luteolum).